The chain runs to 320 residues: tRNA uridine(34) hydroxylase (320 aa).

The region spanning 125-221 (KEKRPLLLDV…YGLKQGSEHW (97 aa)) is the Rhodanese domain. Cys-181 functions as the Cysteine persulfide intermediate in the catalytic mechanism.

This sequence belongs to the TrhO family.

The catalysed reaction is uridine(34) in tRNA + AH2 + O2 = 5-hydroxyuridine(34) in tRNA + A + H2O. Catalyzes oxygen-dependent 5-hydroxyuridine (ho5U) modification at position 34 in tRNAs. This chain is tRNA uridine(34) hydroxylase, found in Protochlamydia amoebophila (strain UWE25).